We begin with the raw amino-acid sequence, 479 residues long: Putative F-box/LRR-repeat protein At1g56400 (479 aa).

An F-box domain is found at 12–60 (QDRLSNLPDVLLIMIISCLSFKECIRTSVLAKRWRYLCRETRNISFKET). 7 LRR repeats span residues 99 to 129 (YFSIPSDFLAAVESLIEFAVSRQVKNLVLDF), 139 to 167 (CASRYDYVCVQLPVCVYSLTTLESLKIYS), 186 to 211 (IGWIKLTDVESLLLNSPTLKSLSINY), 228 to 254 (VFESCDFSSFMVCCFDLPNVEIFKYSG), 287 to 312 (RTKLEGSVLSAFLNNLRGARTLSVCP), 342 to 367 (LHVMEFKGIKLLLDNCPNLETLTFDI), and 419 to 446 (LKFLIQSGRGRWPGREHGPMLERVELYM).

In Arabidopsis thaliana (Mouse-ear cress), this protein is Putative F-box/LRR-repeat protein At1g56400.